The sequence spans 153 residues: UPF0260 protein CKO_01185 (153 aa).

The protein belongs to the UPF0260 family.

In Citrobacter koseri (strain ATCC BAA-895 / CDC 4225-83 / SGSC4696), this protein is UPF0260 protein CKO_01185.